A 227-amino-acid polypeptide reads, in one-letter code: E3 ubiquitin-protein ligase ZNRF1 (227 aa).

The interval 1 to 38 (MGGKQSTAARSRGPFPGVSTDDSAVPPPGGAPHFGHYR) is disordered. A lipid anchor (N-myristoyl glycine) is attached at G2. Residues 2-10 (GGKQSTAAR) form a required for endosomal and lysosomal localization and myristoylation region. Residues S50, S52, and S53 each carry the phosphoserine modification. Residues 77–105 (RGAGDAERAPGSGGSASDSTYAHGNGYQE) form a disordered region. Y103 is modified (phosphotyrosine). S123 carries the phosphoserine modification. The segment at 184–225 (CVICLEELLQGDTIARLPCLCIYHKSCIDSWFEVNRSCPEHP) adopts an RING-type; atypical zinc-finger fold.

Interacts with AKT1, GLUL and TUBB2A. Interacts with ZNRF2. Interacts (via its RING domain) with UBE2N. Interacts (when phosphorylated) with YWHAE. Post-translationally, N-myristoylation targets ZNRF1 to intracellular membranes. In terms of processing, phosphorylated by SRC at Tyr-103; leading to 'Lys-63'-linked ubiquitination of TLR3, lysosomal trafficking and degradation.

The protein localises to the endosome. The protein resides in the lysosome. Its subcellular location is the membrane. It is found in the cytoplasmic vesicle. It localises to the secretory vesicle. The protein localises to the synaptic vesicle membrane. The catalysed reaction is S-ubiquitinyl-[E2 ubiquitin-conjugating enzyme]-L-cysteine + [acceptor protein]-L-lysine = [E2 ubiquitin-conjugating enzyme]-L-cysteine + N(6)-ubiquitinyl-[acceptor protein]-L-lysine.. The protein operates within protein modification; protein ubiquitination. In terms of biological role, E3 ubiquitin-protein ligase that plays a role in different processes including cell differentiation, receptor recycling or regulation of inflammation. Mediates the ubiquitination of AKT1 and GLUL, thereby playing a role in neuron cells differentiation. Plays a role in the establishment and maintenance of neuronal transmission and plasticity. Regulates Schwann cells differentiation by mediating ubiquitination of GLUL. Promotes neurodegeneration by mediating 'Lys-48'-linked polyubiquitination and subsequent degradation of AKT1 in axons: degradation of AKT1 prevents AKT1-mediated phosphorylation of GSK3B, leading to GSK3B activation and phosphorylation of DPYSL2/CRMP2 followed by destabilization of microtubule assembly in axons. Ubiquitinates the Na(+)/K(+) ATPase alpha-1 subunit/ATP1A1 and thereby influences its endocytosis and/or degradation. Controls ligand-induced EGFR signaling via mediating receptor ubiquitination and recruitment of the ESCRT machinery. Acts as a negative feedback mechanism controlling TLR3 trafficking by mediating TLR3 'Lys-63'-linked polyubiquitination to reduce type I IFN production. Modulates inflammation by promoting caveolin-1/CAV1 ubiquitination and degradation to regulate TLR4-activated immune response. The sequence is that of E3 ubiquitin-protein ligase ZNRF1 (ZNRF1) from Bos taurus (Bovine).